Consider the following 433-residue polypeptide: MRVLVLGSGVIGTTSAYYLARAGFQVTVVDRQPAAAMETSFANAGQVSPGYASPWAAPGVPLKAIKWLLQRHAPLAIKATADIDQYLWMAQMLRNCTASRYTVNKERMVRLSEYSRDCLDELRLETGIAYEGRSLGTTQLFRTQAQLDNAAKDIAVLEQSGVPYELLDRDGIARVEPALAGVTGILSGALRLPNDQTGDCQLFTTRLAEMAVELGVEFRYGQNIERLDHAGDRINGVWIDGKLETADRYVLALGSYSPQLLKPLGIKAPVYPLKGYSLTVPITNPAMAPTSTILDETYKVAITRFDNRIRVGGMAEIAGFDLSLNPRRRETLEMIVGDLYPQGGDLTQASFWTGLRPTTPDGTPIVGATPFRNLFLNTGHGTLGWTMACGSGRLLADLIARKTPRISAEGLDISRYGNTQENAQHVNPAPAHQ.

An FAD-binding site is contributed by Val3–Tyr17.

Belongs to the DadA oxidoreductase family. Requires FAD as cofactor.

The catalysed reaction is a D-alpha-amino acid + A + H2O = a 2-oxocarboxylate + AH2 + NH4(+). It participates in amino-acid degradation; D-alanine degradation; NH(3) and pyruvate from D-alanine: step 1/1. Oxidative deamination of D-amino acids. In Pseudomonas savastanoi pv. phaseolicola (strain 1448A / Race 6) (Pseudomonas syringae pv. phaseolicola (strain 1448A / Race 6)), this protein is D-amino acid dehydrogenase.